Reading from the N-terminus, the 663-residue chain is Putative glucosamine-6-phosphate deaminase-like protein BT_0258 (663 aa).

A glucosamine-6-phosphate deaminase-like region spans residues 1–290; it reads MKTNLSSQIT…NLTRIQRPWL (290 aa). The active site involves glutamate 184.

The protein in the N-terminal section; belongs to the glucosamine/galactosamine-6-phosphate isomerase family. NagB subfamily.

This Bacteroides thetaiotaomicron (strain ATCC 29148 / DSM 2079 / JCM 5827 / CCUG 10774 / NCTC 10582 / VPI-5482 / E50) protein is Putative glucosamine-6-phosphate deaminase-like protein BT_0258.